Reading from the N-terminus, the 306-residue chain is MIYSKRLILVVGPTGTKKSYLANMLAKKLNVPIISADAYQVYKELNAGVNKPSEKTLSEIKYHFISNISIFDEWSIAHFNKRAKEILEQAPDWTIVCGGSHLYVNSLINDYQLEKQELDTDLFDALDKLDNQEIFNQLCEYDFQEAIKIGKNNRKRLLRALYLFKKYGKKAKNDSKKFDYVVVKCMSDKEKLFPYLSKRLDEMIHDLNWTKEIEYLDKIITDKKLDKELIAMKALGYKEIYDAWKNNQPIDKEIINKKFKRLVKHQLTWTRNKFNDGMKQFTFNFFEDDANRTCDEIIEYIKSNHD.

Gly-12 to Ser-19 lines the ATP pocket.

This sequence belongs to the IPP transferase family. Monomer. Requires Mg(2+) as cofactor.

The catalysed reaction is adenosine(37) in tRNA + dimethylallyl diphosphate = N(6)-dimethylallyladenosine(37) in tRNA + diphosphate. In terms of biological role, catalyzes the transfer of a dimethylallyl group onto the adenine at position 37 in tRNAs that read codons beginning with uridine, leading to the formation of N6-(dimethylallyl)adenosine (i(6)A). The polypeptide is tRNA dimethylallyltransferase (Mycoplasmoides gallisepticum (strain R(low / passage 15 / clone 2)) (Mycoplasma gallisepticum)).